A 196-amino-acid chain; its full sequence is Protein kinase OspG (196 aa).

Belongs to the protein kinase superfamily. Post-translationally, autophosphorylated.

Its subcellular location is the secreted. The protein localises to the host cell. Its function is as follows. Effector proteins function to alter host cell physiology and promote bacterial survival in host tissues. This protein is a kinase that is involved in down-regulation of the host innate response induced by invasive bacteria. The chain is Protein kinase OspG (ospG) from Shigella flexneri serotype X (strain 2002017).